Consider the following 171-residue polypeptide: uncharacterized protein (171 aa).

The first 20 residues, 1–20 (MRRVLFSCFCGLLWSSSGWA), serve as a signal peptide directing secretion. A disulfide bridge connects residues Cys40 and Cys80.

The protein belongs to the fimbrial protein family.

The protein localises to the fimbrium. Its function is as follows. Part of the sfmACDHF fimbrial operon. Could contribute to adhesion to various surfaces in specific environmental niches. Increases adhesion to eukaryotic T24 bladder epithelial cells in the absence of fim genes. This is an uncharacterized protein from Escherichia coli (strain K12).